Here is a 392-residue protein sequence, read N- to C-terminus: Norsolorinic acid reductase B (392 aa).

Aspartate 75 is a binding site for NADP(+). Tyrosine 80 (proton donor) is an active-site residue. NADP(+)-binding positions include 184–185 (SD), glutamine 210, 239–249 (GTLGQGSFQTE), and 311–319 (RKLEHIQGN). The disordered stretch occupies residues 242 to 263 (GQGSFQTEEGRKQREKDNPGRK). A compositionally biased stretch (basic and acidic residues) spans 249 to 261 (EEGRKQREKDNPG).

This sequence belongs to the aldo/keto reductase family. Aldo/keto reductase 2 subfamily.

It participates in mycotoxin biosynthesis. Norsolorinic acid reductase; part of the fragmented gene cluster that mediates the biosynthesis of dothistromin (DOTH), a polyketide toxin very similar in structure to the aflatoxin precursor, versicolorin B. The first step of the pathway is the conversion of acetate to norsolorinic acid (NOR) and requires the fatty acid synthase subunits hexA and hexB, as well as the polyketide synthase pksA. PksA combines a hexanoyl starter unit and 7 malonyl-CoA extender units to synthesize the precursor NOR. The hexanoyl starter unit is provided to the acyl-carrier protein (ACP) domain by the fungal fatty acid synthase hexA/hexB. The second step is the conversion of NOR to averantin (AVN) and requires the norsolorinic acid ketoreductase nor1, which catalyzes the dehydration of norsolorinic acid to form (1'S)-averantin. The cytochrome P450 monooxygenase avnA then catalyzes the hydroxylation of AVN to 5'hydroxyaverantin (HAVN). The next step is performed by adhA that transforms HAVN to averufin (AVF). Averufin might then be converted to hydroxyversicolorone by cypX and avfA. Hydroxyversicolorone is further converted versiconal hemiacetal acetate (VHA) by moxY. VHA is then the substrate for the versiconal hemiacetal acetate esterase est1 to yield versiconal (VAL). Versicolorin B synthase vbsA then converts VAL to versicolorin B (VERB) by closing the bisfuran ring. Then, the activity of the versicolorin B desaturase verB leads to versicolorin A (VERA). DotB, a predicted chloroperoxidase, may perform epoxidation of the A-ring of VERA. Alternatively, a cytochrome P450, such as cypX or avnA could catalyze this step. It is also possible that another, uncharacterized, cytochrome P450 enzyme is responsible for this step. Opening of the epoxide could potentially be achieved by the epoxide hydrolase epoA. However, epoA seems not to be required for DOTH biosynthesis, but other epoxide hydrolases may have the ability to complement this hydrolysis. Alternatively, opening of the epoxide ring could be achieved non-enzymatically. The next step is the deoxygenation of ring A to yield the 5,8-dihydroxyanthraquinone which is most likely catalyzed by the NADPH dehydrogenase encoded by ver1. The last stages of DOTH biosynthesis are proposed to involve hydroxylation of the bisfuran. OrdB and norB might have oxidative roles here. An alternative possibility is that cytochrome P450 monoogenases such as avnA and cypX might perform these steps in addition to previously proposed steps. The protein is Norsolorinic acid reductase B of Dothistroma septosporum (strain NZE10 / CBS 128990) (Red band needle blight fungus).